A 301-amino-acid chain; its full sequence is Polyamine aminopropyltransferase (301 aa).

The region spanning 4–240 is the PABS domain; sequence WHWLLEWQTP…GLWGFVYGGV (237 aa). An S-methyl-5'-thioadenosine-binding site is contributed by Gln33. Spermidine is bound by residues His64 and Glu89. Residues Asp109 and 141–142 contribute to the S-methyl-5'-thioadenosine site; that span reads DG. The active-site Proton acceptor is Asp159.

The protein belongs to the spermidine/spermine synthase family. In terms of assembly, homodimer or homotetramer.

It localises to the cytoplasm. It carries out the reaction S-adenosyl 3-(methylsulfanyl)propylamine + putrescine = S-methyl-5'-thioadenosine + spermidine + H(+). The protein operates within amine and polyamine biosynthesis; spermidine biosynthesis; spermidine from putrescine: step 1/1. In terms of biological role, catalyzes the irreversible transfer of a propylamine group from the amino donor S-adenosylmethioninamine (decarboxy-AdoMet) to putrescine (1,4-diaminobutane) to yield spermidine. This chain is Polyamine aminopropyltransferase, found in Saccharolobus islandicus (strain Y.N.15.51 / Yellowstone #2) (Sulfolobus islandicus).